Consider the following 790-residue polypeptide: Kinesin-like protein KIN-14D (790 aa).

Disordered regions lie at residues Met1–Ser56 and Asp116–Lys139. Positions Met1–Thr66 are globular. Residues Val16–Thr33 show a composition bias toward basic and acidic residues. A compositionally biased stretch (polar residues) spans Gln34–Gly55. Coiled-coil stretches lie at residues Lys117 to Gln316 and Ser347 to Lys426. Basic and acidic residues predominate over residues Ala127–Lys139. The Kinesin motor domain maps to Asn428 to Cys769. Gly513 to Thr520 contacts ATP.

Belongs to the TRAFAC class myosin-kinesin ATPase superfamily. Kinesin family. KIN-14 subfamily. Slightly expressed in anther lobes with pollen mother cells at anther stage 5. Strongly expressed at anther stage 6 in the tapetum and meiotic cells. Also detected in the gynoecium and the ovule.

Its subcellular location is the cytoplasm. The protein resides in the cytoskeleton. It localises to the phragmoplast. In terms of biological role, kinesin that supports microtubule movement in an ATP-dependent manner and that functions as a minus-end directed motor as well as a plus-end tracking protein. During mitosis, is involved in early spindle assembly. Participates in the capture of antiparallel interpolar microtubules and helps in generating force to coalign microtubules. The polypeptide is Kinesin-like protein KIN-14D (Arabidopsis thaliana (Mouse-ear cress)).